Consider the following 492-residue polypeptide: GTPase Der (492 aa).

EngA-type G domains follow at residues 3 to 166 (PVVA…MDDV) and 205 to 378 (IKLA…DSST). GTP contacts are provided by residues 9 to 16 (GRPNVGKS), 56 to 60 (DTGGI), 118 to 121 (NKTD), 211 to 218 (GRPNVGKS), 258 to 262 (DTAGV), and 323 to 326 (NKWD). In terms of domain architecture, KH-like spans 379 to 463 (RRVSTALLTR…PIRIQFKEGA (85 aa)).

It belongs to the TRAFAC class TrmE-Era-EngA-EngB-Septin-like GTPase superfamily. EngA (Der) GTPase family. As to quaternary structure, associates with the 50S ribosomal subunit.

Functionally, GTPase that plays an essential role in the late steps of ribosome biogenesis. This Cronobacter sakazakii (strain ATCC BAA-894) (Enterobacter sakazakii) protein is GTPase Der.